Consider the following 165-residue polypeptide: Xanthine-guanine phosphoribosyltransferase (165 aa).

Residues 41-42 (RG) and 98-106 (DDLTDTGKT) contribute to the 5-phospho-alpha-D-ribose 1-diphosphate site. Aspartate 99 lines the Mg(2+) pocket. Guanine-binding residues include aspartate 102 and isoleucine 145. Residues aspartate 102 and isoleucine 145 each coordinate xanthine. GMP contacts are provided by residues 102 to 106 (DTGKT) and 144 to 145 (WI).

This sequence belongs to the purine/pyrimidine phosphoribosyltransferase family. XGPT subfamily. In terms of assembly, homotetramer. Requires Mg(2+) as cofactor.

It is found in the cell inner membrane. It carries out the reaction GMP + diphosphate = guanine + 5-phospho-alpha-D-ribose 1-diphosphate. The catalysed reaction is XMP + diphosphate = xanthine + 5-phospho-alpha-D-ribose 1-diphosphate. It catalyses the reaction IMP + diphosphate = hypoxanthine + 5-phospho-alpha-D-ribose 1-diphosphate. The protein operates within purine metabolism; GMP biosynthesis via salvage pathway; GMP from guanine: step 1/1. Its pathway is purine metabolism; XMP biosynthesis via salvage pathway; XMP from xanthine: step 1/1. Functionally, purine salvage pathway enzyme that catalyzes the transfer of the ribosyl-5-phosphate group from 5-phospho-alpha-D-ribose 1-diphosphate (PRPP) to the N9 position of the 6-oxopurines guanine and xanthine to form the corresponding ribonucleotides GMP (guanosine 5'-monophosphate) and XMP (xanthosine 5'-monophosphate), with the release of PPi. To a lesser extent, also acts on hypoxanthine. This is Xanthine-guanine phosphoribosyltransferase from Brucella suis (strain ATCC 23445 / NCTC 10510).